Consider the following 563-residue polypeptide: Arginine--tRNA ligase (563 aa).

The short motif at 121–131 (PNIAKPMSMGH) is the 'HIGH' region element.

This sequence belongs to the class-I aminoacyl-tRNA synthetase family. In terms of assembly, monomer.

It localises to the cytoplasm. The catalysed reaction is tRNA(Arg) + L-arginine + ATP = L-arginyl-tRNA(Arg) + AMP + diphosphate. The polypeptide is Arginine--tRNA ligase (Leuconostoc citreum (strain KM20)).